The primary structure comprises 962 residues: Protease 3 (962 aa).

An N-terminal signal peptide occupies residues 1-23 (MPRSTWFKALLLLVALWAPLSQA). Zn(2+) is bound at residue His-88. Glu-91 serves as the catalytic Proton acceptor. Zn(2+)-binding residues include His-92 and Glu-169.

This sequence belongs to the peptidase M16 family. As to quaternary structure, monomer. Zn(2+) is required as a cofactor.

It is found in the periplasm. The enzyme catalyses Preferential cleavage of 16-Tyr-|-Leu-17 and 25-Phe-|-Tyr-26 bonds of oxidized insulin B chain. Also acts on other substrates of Mw less than 7 kDa such as insulin and glucagon.. In terms of biological role, endopeptidase that degrades small peptides of less than 7 kDa, such as glucagon and insulin. The chain is Protease 3 (ptrA) from Escherichia coli O157:H7.